A 348-amino-acid chain; its full sequence is Protein RecA (348 aa).

G64–T71 is a binding site for ATP. Basic and acidic residues predominate over residues Y325–L335. Residues Y325–E348 form a disordered region.

The protein belongs to the RecA family.

It localises to the cytoplasm. In terms of biological role, can catalyze the hydrolysis of ATP in the presence of single-stranded DNA, the ATP-dependent uptake of single-stranded DNA by duplex DNA, and the ATP-dependent hybridization of homologous single-stranded DNAs. It interacts with LexA causing its activation and leading to its autocatalytic cleavage. In Listeria monocytogenes serotype 1/2a (strain 10403S), this protein is Protein RecA.